The chain runs to 327 residues: Phenylalanine--tRNA ligase alpha subunit (327 aa).

Glu252 contacts Mg(2+).

Belongs to the class-II aminoacyl-tRNA synthetase family. Phe-tRNA synthetase alpha subunit type 1 subfamily. In terms of assembly, tetramer of two alpha and two beta subunits. The cofactor is Mg(2+).

It is found in the cytoplasm. The enzyme catalyses tRNA(Phe) + L-phenylalanine + ATP = L-phenylalanyl-tRNA(Phe) + AMP + diphosphate + H(+). The protein is Phenylalanine--tRNA ligase alpha subunit of Escherichia coli O139:H28 (strain E24377A / ETEC).